Reading from the N-terminus, the 436-residue chain is UDP-N-acetylglucosamine 1-carboxyvinyltransferase 1 (436 aa).

Residue Lys-22 to Asn-23 participates in phosphoenolpyruvate binding. Arg-93 lines the UDP-N-acetyl-alpha-D-glucosamine pocket. Cys-117 acts as the Proton donor in catalysis. Cys-117 is subject to 2-(S-cysteinyl)pyruvic acid O-phosphothioketal. UDP-N-acetyl-alpha-D-glucosamine is bound by residues Arg-122–Gln-126, Asp-306, and Val-328.

The protein belongs to the EPSP synthase family. MurA subfamily.

Its subcellular location is the cytoplasm. It carries out the reaction phosphoenolpyruvate + UDP-N-acetyl-alpha-D-glucosamine = UDP-N-acetyl-3-O-(1-carboxyvinyl)-alpha-D-glucosamine + phosphate. It participates in cell wall biogenesis; peptidoglycan biosynthesis. Cell wall formation. Adds enolpyruvyl to UDP-N-acetylglucosamine. Essential for cell growth. The chain is UDP-N-acetylglucosamine 1-carboxyvinyltransferase 1 from Bacillus subtilis (strain 168).